Here is a 188-residue protein sequence, read N- to C-terminus: Capsid protein (188 aa).

Residues 150 to 181 are compositionally biased toward basic residues; sequence RRRGGARASRSPRRRTPSPRRRRSQSPRRRRS. The segment at 150–188 is disordered; that stretch reads RRRGGARASRSPRRRTPSPRRRRSQSPRRRRSQSPSANC. Phosphoserine; by host is present on residues serine 160, serine 167, and serine 175. The 1; half-length repeat unit spans residues 160–166; sequence SPRRRTP. The tract at residues 160–182 is 3 X 8 AA repeats of S-P-R-R-R-[PR]-S-Q; sequence SPRRRTPSPRRRRSQSPRRRRSQ. Positions 163–180 match the Bipartite nuclear localization signal motif; that stretch reads RRTPSPRRRRSQSPRRRR. A run of 2 repeats spans residues 167–174 and 175–182. An RNA binding region spans residues 182-188; sequence QSPSANC.

Belongs to the orthohepadnavirus core antigen family. As to quaternary structure, homodimerizes, then multimerizes. Interacts with cytosol exposed regions of viral L glycoprotein present in the reticulum-to-Golgi compartment. Interacts with human FLNB. Phosphorylated form interacts with host importin alpha; this interaction depends on the exposure of the NLS, which itself depends upon genome maturation and/or phosphorylation of the capsid protein. Interacts with host NUP153. Post-translationally, phosphorylated by host SRPK1, SRPK2, and maybe protein kinase C or GAPDH. Phosphorylation is critical for pregenomic RNA packaging. Protein kinase C phosphorylation is stimulated by HBx protein and may play a role in transport of the viral genome to the nucleus at the late step during the viral replication cycle.

It localises to the virion. It is found in the host cytoplasm. Self assembles to form an icosahedral capsid. Most capsids appear to be large particles with an icosahedral symmetry of T=4 and consist of 240 copies of capsid protein, though a fraction forms smaller T=3 particles consisting of 180 capsid proteins. Entering capsids are transported along microtubules to the nucleus. Phosphorylation of the capsid is thought to induce exposure of nuclear localization signal in the C-terminal portion of the capsid protein that allows binding to the nuclear pore complex via the importin (karyopherin-) alpha and beta. Capsids are imported in intact form through the nuclear pore into the nuclear basket, where it probably binds NUP153. Only capsids that contain the mature viral genome can release the viral DNA and capsid protein into the nucleoplasm. Immature capsids get stuck in the basket. Capsids encapsulate the pre-genomic RNA and the P protein. Pre-genomic RNA is reverse-transcribed into DNA while the capsid is still in the cytoplasm. The capsid can then either be directed to the nucleus, providing more genomes for transcription, or bud through the endoplasmic reticulum to provide new virions. This is Capsid protein from Marmota monax (Woodchuck).